Here is a 240-residue protein sequence, read N- to C-terminus: 4-hydroxy-tetrahydrodipicolinate reductase (240 aa).

NAD(+)-binding positions include Ala-79–Thr-81 and Ser-103–Met-106. The active-site Proton donor/acceptor is the His-135. His-136 contacts (S)-2,3,4,5-tetrahydrodipicolinate. Catalysis depends on Lys-139, which acts as the Proton donor. Gly-145 to Thr-146 lines the (S)-2,3,4,5-tetrahydrodipicolinate pocket.

It belongs to the DapB family.

The protein resides in the cytoplasm. The enzyme catalyses (S)-2,3,4,5-tetrahydrodipicolinate + NAD(+) + H2O = (2S,4S)-4-hydroxy-2,3,4,5-tetrahydrodipicolinate + NADH + H(+). It catalyses the reaction (S)-2,3,4,5-tetrahydrodipicolinate + NADP(+) + H2O = (2S,4S)-4-hydroxy-2,3,4,5-tetrahydrodipicolinate + NADPH + H(+). It participates in amino-acid biosynthesis; L-lysine biosynthesis via DAP pathway; (S)-tetrahydrodipicolinate from L-aspartate: step 4/4. In terms of biological role, catalyzes the conversion of 4-hydroxy-tetrahydrodipicolinate (HTPA) to tetrahydrodipicolinate. The sequence is that of 4-hydroxy-tetrahydrodipicolinate reductase from Staphylococcus aureus (strain Mu3 / ATCC 700698).